The sequence spans 141 residues: MAKKVVKVVKLQIPAGKANPAPPVGPALGQAGVNIMGFCKEFNARTADQAGLIIPVEISVYEDRSFTFITKTPPAAVLLKKAAGIESGSGEPNRNKVATVKRDKVREIAETKMPDLNAADVEAAMRMVEGTARSMGIVIED.

It belongs to the universal ribosomal protein uL11 family. In terms of assembly, part of the ribosomal stalk of the 50S ribosomal subunit. Interacts with L10 and the large rRNA to form the base of the stalk. L10 forms an elongated spine to which 2 L12 dimers bind in a sequential fashion forming a pentameric L10(L12)2(L12)2 complex. In stalled/isolated 50S subunits interacts with RqcH. One or more lysine residues are methylated.

In terms of biological role, forms part of the ribosomal stalk which helps the ribosome interact with GTP-bound translation factors. Required to recruit RqcH, which is part of the ribosome quality control system (RQC), to stalled 50S ribosomal subunits. The polypeptide is Large ribosomal subunit protein uL11 (Bacillus subtilis (strain 168)).